Consider the following 628-residue polypeptide: Chaperone protein HtpG (628 aa).

The tract at residues 1 to 334 is a; substrate-binding; sequence MTTTDTASET…SEDLPLNLSR (334 aa). Residues 335–550 form a b region; sequence EMLQNNPQLA…GFGPDRELEK (216 aa). Residues 551–628 form a c region; the sequence is MLARANKGAA…LVLRGLVAHG (78 aa).

The protein belongs to the heat shock protein 90 family. Homodimer.

The protein localises to the cytoplasm. Its function is as follows. Molecular chaperone. Has ATPase activity. This Rhodopseudomonas palustris (strain BisB5) protein is Chaperone protein HtpG.